The chain runs to 514 residues: Light-independent protochlorophyllide reductase subunit B (514 aa).

Asp36 serves as a coordination point for [4Fe-4S] cluster. Asp300 (proton donor) is an active-site residue. A substrate-binding site is contributed by 435–436 (GM).

Belongs to the ChlB/BchB/BchZ family. Protochlorophyllide reductase is composed of three subunits; ChlL, ChlN and ChlB. Forms a heterotetramer of two ChlB and two ChlN subunits. [4Fe-4S] cluster is required as a cofactor.

It is found in the plastid. The protein resides in the chloroplast. The catalysed reaction is chlorophyllide a + oxidized 2[4Fe-4S]-[ferredoxin] + 2 ADP + 2 phosphate = protochlorophyllide a + reduced 2[4Fe-4S]-[ferredoxin] + 2 ATP + 2 H2O. Its pathway is porphyrin-containing compound metabolism; chlorophyll biosynthesis (light-independent). Functionally, component of the dark-operative protochlorophyllide reductase (DPOR) that uses Mg-ATP and reduced ferredoxin to reduce ring D of protochlorophyllide (Pchlide) to form chlorophyllide a (Chlide). This reaction is light-independent. The NB-protein (ChlN-ChlB) is the catalytic component of the complex. The sequence is that of Light-independent protochlorophyllide reductase subunit B from Pleurastrum terricola (Filamentous green alga).